The primary structure comprises 247 residues: Probable transcriptional regulatory protein YPK_2146 (247 aa).

This sequence belongs to the TACO1 family.

The protein resides in the cytoplasm. This chain is Probable transcriptional regulatory protein YPK_2146, found in Yersinia pseudotuberculosis serotype O:3 (strain YPIII).